A 506-amino-acid polypeptide reads, in one-letter code: MSGIDFKQKISFQRPFSKPSSAEDEYEITRVFESDRGRIVNSAAIRRLQQKTQVFPLERNAAVRSRLTHSLEVQQVGRYIAKEILNRFKQDKKITAYGLDKLLDPFESIVEMACLMHDIGNPPFGHFGESAINDWFTKRMDPNGGSGSEPQSTDQCQVDVLKLCEGETELNILRSKIRHDLSQFEGNAQAIRLVHSLLKLNLTYAQVGCILKYTKPAYWSAPIPASHNYLMKKPGFYLAEENYVKELRRELNMEEFDRFPLTYIMEAADDISYCIADLEDAVEKNIFSVEQLYDHMSQEWGAVTPGDLFDKVVGAAFRQLGREQGRRSSEDQFFMYLRVNTVGKLVPHAAQRFIENLPAVFSGSFNQALLEDSSAACKLLQIFKRVAVKHVFNHPEVEQLELQGYRVISGLLDIYSPLLAMPETAFTQLVADDRHRKYPIETRLFHKLSIKHRLAYAESAERIRNLPSEQYEIYEYYYRARLIQDYISGMTDLYAYDEYRRLMAAE.

The HD domain occupies 66–274; sequence RLTHSLEVQQ…MEAADDISYC (209 aa).

This sequence belongs to the dGTPase family. Type 1 subfamily. Homotetramer. The cofactor is Mg(2+).

The enzyme catalyses dGTP + H2O = 2'-deoxyguanosine + triphosphate + H(+). Functionally, dGTPase preferentially hydrolyzes dGTP over the other canonical NTPs. The chain is Deoxyguanosinetriphosphate triphosphohydrolase from Yersinia pestis bv. Antiqua (strain Antiqua).